The sequence spans 360 residues: Phospho-N-acetylmuramoyl-pentapeptide-transferase (360 aa).

10 helical membrane passes run 21-41, 73-93, 94-114, 132-152, 168-188, 199-219, 236-256, 263-283, 288-308, and 338-358; these read YLSFRAILSVLTALGLSLWMG, TMGGVMILAAISITILLWANL, SNPYVWAVLAVLMGYGAVGFV, WKYFWQSAIALIVAFALYAYG, VMPQLGLMYIVLTYFVIVGTS, GLAIMPTVLVAAGFAVIAWAT, ASELVVVCTAIVGAGLGFLWF, VFMGDVGSLALGGALGTIAVL, LVLVIMGGVFVMETLSVILQV, and VIVRFWIISMVLVLIGLATLK.

Belongs to the glycosyltransferase 4 family. MraY subfamily. It depends on Mg(2+) as a cofactor.

The protein localises to the cell inner membrane. The enzyme catalyses UDP-N-acetyl-alpha-D-muramoyl-L-alanyl-gamma-D-glutamyl-meso-2,6-diaminopimeloyl-D-alanyl-D-alanine + di-trans,octa-cis-undecaprenyl phosphate = di-trans,octa-cis-undecaprenyl diphospho-N-acetyl-alpha-D-muramoyl-L-alanyl-D-glutamyl-meso-2,6-diaminopimeloyl-D-alanyl-D-alanine + UMP. It participates in cell wall biogenesis; peptidoglycan biosynthesis. Its function is as follows. Catalyzes the initial step of the lipid cycle reactions in the biosynthesis of the cell wall peptidoglycan: transfers peptidoglycan precursor phospho-MurNAc-pentapeptide from UDP-MurNAc-pentapeptide onto the lipid carrier undecaprenyl phosphate, yielding undecaprenyl-pyrophosphoryl-MurNAc-pentapeptide, known as lipid I. This chain is Phospho-N-acetylmuramoyl-pentapeptide-transferase, found in Vibrio vulnificus (strain CMCP6).